The chain runs to 118 residues: UPF0134 protein MPN_287 (118 aa).

The protein belongs to the UPF0134 family.

The chain is UPF0134 protein MPN_287 from Mycoplasma pneumoniae (strain ATCC 29342 / M129 / Subtype 1) (Mycoplasmoides pneumoniae).